A 311-amino-acid polypeptide reads, in one-letter code: Nod factor export ATP-binding protein I (311 aa).

One can recognise an ABC transporter domain in the interval 13–243 (IDLAGVSKSY…QIGCPVIEIY (231 aa)). Residue 45 to 52 (GPNGAGKS) coordinates ATP.

This sequence belongs to the ABC transporter superfamily. Lipooligosaccharide exporter (TC 3.A.1.102) family. In terms of assembly, the complex is composed of two ATP-binding proteins (NodI) and two transmembrane proteins (NodJ).

The protein localises to the cell inner membrane. Functionally, part of the ABC transporter complex NodIJ involved in the export of the nodulation factors (Nod factors), the bacterial signal molecules that induce symbiosis and subsequent nodulation induction. Nod factors are LCO (lipo-chitin oligosaccharide), a modified beta-1,4-linked N-acetylglucosamine oligosaccharide. This subunit is responsible for energy coupling to the transport system. The chain is Nod factor export ATP-binding protein I from Rhizobium johnstonii (strain DSM 114642 / LMG 32736 / 3841) (Rhizobium leguminosarum bv. viciae).